Consider the following 77-residue polypeptide: Conotoxin ArMSGL-0141 (77 aa).

The signal sequence occupies residues 1 to 18 (MSGLGILVLTLLLLVYMA). Positions 19 to 44 (TSHQDAGEKQATQRDAINVRRRRSLT) are excised as a propeptide. Disulfide bonds link Cys51–Cys63, Cys55–Cys71, and Cys62–Cys75. Phe76 is modified (phenylalanine amide).

It belongs to the conotoxin O3 superfamily. In terms of tissue distribution, expressed by the venom duct.

The protein localises to the secreted. This is Conotoxin ArMSGL-0141 from Conus arenatus (Sand-dusted cone).